The primary structure comprises 185 residues: Elongation factor P (185 aa).

Belongs to the elongation factor P family.

It localises to the cytoplasm. It participates in protein biosynthesis; polypeptide chain elongation. Its function is as follows. Involved in peptide bond synthesis. Stimulates efficient translation and peptide-bond synthesis on native or reconstituted 70S ribosomes in vitro. Probably functions indirectly by altering the affinity of the ribosome for aminoacyl-tRNA, thus increasing their reactivity as acceptors for peptidyl transferase. This chain is Elongation factor P, found in Alkaliphilus metalliredigens (strain QYMF).